The sequence spans 242 residues: Biosynthetic peptidoglycan transglycosylase (242 aa).

Residues 19–39 form a helical membrane-spanning segment; sequence ILAALAVFWGGGIALFSVVPV.

This sequence belongs to the glycosyltransferase 51 family.

It localises to the cell inner membrane. The enzyme catalyses [GlcNAc-(1-&gt;4)-Mur2Ac(oyl-L-Ala-gamma-D-Glu-L-Lys-D-Ala-D-Ala)](n)-di-trans,octa-cis-undecaprenyl diphosphate + beta-D-GlcNAc-(1-&gt;4)-Mur2Ac(oyl-L-Ala-gamma-D-Glu-L-Lys-D-Ala-D-Ala)-di-trans,octa-cis-undecaprenyl diphosphate = [GlcNAc-(1-&gt;4)-Mur2Ac(oyl-L-Ala-gamma-D-Glu-L-Lys-D-Ala-D-Ala)](n+1)-di-trans,octa-cis-undecaprenyl diphosphate + di-trans,octa-cis-undecaprenyl diphosphate + H(+). Its pathway is cell wall biogenesis; peptidoglycan biosynthesis. Functionally, peptidoglycan polymerase that catalyzes glycan chain elongation from lipid-linked precursors. The polypeptide is Biosynthetic peptidoglycan transglycosylase (Salmonella newport (strain SL254)).